We begin with the raw amino-acid sequence, 310 residues long: D-alanine--D-alanine ligase (310 aa).

One can recognise an ATP-grasp domain in the interval 104-305 (KRLFHSEGLP…MPQLAERILQ (202 aa)). 135–190 (LGDFHGAAFVKPLDSGSSVGISRAVGKDELIRGVAKALSVSHRCMVERAIEGRELT) lines the ATP pocket. The Mg(2+) site is built by Asp-259, Glu-272, and Asn-274.

The protein belongs to the D-alanine--D-alanine ligase family. Mg(2+) serves as cofactor. Mn(2+) is required as a cofactor.

It localises to the cytoplasm. It carries out the reaction 2 D-alanine + ATP = D-alanyl-D-alanine + ADP + phosphate + H(+). Its pathway is cell wall biogenesis; peptidoglycan biosynthesis. Its function is as follows. Cell wall formation. The protein is D-alanine--D-alanine ligase of Magnetococcus marinus (strain ATCC BAA-1437 / JCM 17883 / MC-1).